A 472-amino-acid chain; its full sequence is Inactive CLIP domain-containing serine protease A3 (472 aa).

Transmembrane regions (helical) follow at residues 51 to 71 and 78 to 98; these read ISFV…WSSM and LPAL…HTYA. Asn-122, Asn-133, Asn-149, and Asn-152 each carry an N-linked (GlcNAc...) asparagine glycan. Positions 223 to 470 constitute a Peptidase S1 domain; that stretch reads VAAAKAPAAG…YVPWITSTVS (248 aa). 3 cysteine pairs are disulfide-bonded: Cys-354/Cys-428, Cys-386/Cys-408, and Cys-418/Cys-446.

This sequence belongs to the peptidase S1 family. CLIP subfamily. As to expression, expressed at highest levels in head and salivary gland. Expressed in ovary and carcass. Minimal expression in midgut.

The protein resides in the membrane. In terms of biological role, probable inactive serine protease. Induces migration of cultured mouse embryonic fibroblasts. Its function is as follows. (Microbial infection) Promotes dengue virus type 2 replication in the host. This Aedes aegypti (Yellowfever mosquito) protein is Inactive CLIP domain-containing serine protease A3.